The sequence spans 156 residues: SsrA-binding protein (156 aa).

It belongs to the SmpB family.

It is found in the cytoplasm. Required for rescue of stalled ribosomes mediated by trans-translation. Binds to transfer-messenger RNA (tmRNA), required for stable association of tmRNA with ribosomes. tmRNA and SmpB together mimic tRNA shape, replacing the anticodon stem-loop with SmpB. tmRNA is encoded by the ssrA gene; the 2 termini fold to resemble tRNA(Ala) and it encodes a 'tag peptide', a short internal open reading frame. During trans-translation Ala-aminoacylated tmRNA acts like a tRNA, entering the A-site of stalled ribosomes, displacing the stalled mRNA. The ribosome then switches to translate the ORF on the tmRNA; the nascent peptide is terminated with the 'tag peptide' encoded by the tmRNA and targeted for degradation. The ribosome is freed to recommence translation, which seems to be the essential function of trans-translation. The chain is SsrA-binding protein from Renibacterium salmoninarum (strain ATCC 33209 / DSM 20767 / JCM 11484 / NBRC 15589 / NCIMB 2235).